The following is a 631-amino-acid chain: MTAPPGARPRAASPPPNMRSRDFWGSAARLVKRLAPQRRLSIAVITLGIAGTTIGVIVPRILGHATDLLFNGVIGRGLPGGITKAQAVASARARGDNTFADLLSGMNVVPGQGVDFAAVERTLALALALYLAAALMIWAQARLLNLTVQKTMVRLRTDVEDKVHRLPLSYFDGQQRGELLSRVTNDIDNLQSSLSMTISQLVTSILTMVAVLAMMVSISGLLALITLLTVPLSLLVTRAITRRSQPLFVAHWTSTGRLNAHLEETYSGFTVVKTFGHQAAARERFHELNDDVYQAGFGAQFLSGLVQPATAFIGNLGYVAVAVAGGLQVATGQITLGSIQAFIQYIRQFNMPLSQLAGMYNALQSGVASAERVFDVLDEPEESPEPEPELPNLTGRVEFEHVNFAYLPGTPVIRDLSLVAEPGSTVAIVGPTGAGKTTLVNLLMRFYEIGSGRILIDGVDIASVSRQSLRSRIGMVLQDTWLYDGTIAENIAYGRPEATTDEIVEAARAAHVDRFVNTLPAGYQTRVSGDGGSISVGEKQLITIARAFLARPQLLILDEATSSVDTRTELLIQRAMRELRRDRTSFIIAHRLSTIRDADHILVVQTGQIVERGNHAELLARRGVYYQMTRA.

The span at 1–11 (MTAPPGARPRA) shows a compositional bias: low complexity. The disordered stretch occupies residues 1-20 (MTAPPGARPRAASPPPNMRS). Helical transmembrane passes span 42–62 (IAVI…PRIL), 123–143 (LALA…QARL), and 205–225 (ILTM…LALI). The region spanning 42 to 365 (IAVITLGIAG…LAGMYNALQS (324 aa)) is the ABC transmembrane type-1 domain. In terms of domain architecture, ABC transporter spans 397-631 (VEFEHVNFAY…RGVYYQMTRA (235 aa)). 430 to 437 (GPTGAGKT) contacts ATP.

It belongs to the ABC transporter superfamily. Lipid exporter (TC 3.A.1.106) family.

The protein localises to the cell inner membrane. Functionally, ABC transporter involved in fatty acid import. Transmembrane domains (TMD) form a pore in the membrane and the ATP-binding domain (NBD) is responsible for energy generation. The chain is Fatty acid ABC transporter ATP-binding/permease protein from Mycobacterium bovis (strain ATCC BAA-935 / AF2122/97).